The chain runs to 204 residues: Large ribosomal subunit protein uL4 (204 aa).

The interval 44–76 (RAGTHRTKGMGEISGTTKKPYRQKGTGSARQGS) is disordered.

This sequence belongs to the universal ribosomal protein uL4 family. As to quaternary structure, part of the 50S ribosomal subunit.

Functionally, one of the primary rRNA binding proteins, this protein initially binds near the 5'-end of the 23S rRNA. It is important during the early stages of 50S assembly. It makes multiple contacts with different domains of the 23S rRNA in the assembled 50S subunit and ribosome. Forms part of the polypeptide exit tunnel. In Gluconobacter oxydans (strain 621H) (Gluconobacter suboxydans), this protein is Large ribosomal subunit protein uL4.